Consider the following 142-residue polypeptide: Large ribosomal subunit protein uL11 (142 aa).

It belongs to the universal ribosomal protein uL11 family. In terms of assembly, part of the ribosomal stalk of the 50S ribosomal subunit. Interacts with L10 and the large rRNA to form the base of the stalk. L10 forms an elongated spine to which L12 dimers bind in a sequential fashion forming a multimeric L10(L12)X complex. In terms of processing, one or more lysine residues are methylated.

Forms part of the ribosomal stalk which helps the ribosome interact with GTP-bound translation factors. The polypeptide is Large ribosomal subunit protein uL11 (Photobacterium profundum (strain SS9)).